A 163-amino-acid polypeptide reads, in one-letter code: Urease accessory protein UreE (163 aa).

The protein belongs to the UreE family.

The protein resides in the cytoplasm. Its function is as follows. Involved in urease metallocenter assembly. Binds nickel. Probably functions as a nickel donor during metallocenter assembly. The polypeptide is Urease accessory protein UreE (Actinomyces naeslundii).